Here is a 313-residue protein sequence, read N- to C-terminus: 2,3-dihydroxyphenylpropionate/2,3-dihydroxicinnamic acid 1,2-dioxygenase (313 aa).

The Proton donor role is filled by H115. Catalysis depends on H179, which acts as the Proton acceptor.

It belongs to the LigB/MhpB extradiol dioxygenase family. In terms of assembly, homotetramer. Requires Fe(2+) as cofactor.

It carries out the reaction 3-(2,3-dihydroxyphenyl)propanoate + O2 = (2Z,4E)-2-hydroxy-6-oxonona-2,4-dienedioate + H(+). It catalyses the reaction (2E)-3-(2,3-dihydroxyphenyl)prop-2-enoate + O2 = (2Z,4E,7E)-2-hydroxy-6-oxonona-2,4,7-trienedioate + H(+). It functions in the pathway aromatic compound metabolism; 3-phenylpropanoate degradation. Functionally, catalyzes the non-heme iron(II)-dependent oxidative cleavage of 2,3-dihydroxyphenylpropionic acid and 2,3-dihydroxicinnamic acid into 2-hydroxy-6-ketononadienedioate and 2-hydroxy-6-ketononatrienedioate, respectively. The chain is 2,3-dihydroxyphenylpropionate/2,3-dihydroxicinnamic acid 1,2-dioxygenase from Xanthobacter autotrophicus (strain ATCC BAA-1158 / Py2).